We begin with the raw amino-acid sequence, 185 residues long: TATA-box-binding protein (185 aa).

A run of 2 repeats spans residues 8 to 84 (IENI…VEML) and 99 to 175 (IQNM…LHEL).

The protein belongs to the TBP family.

General factor that plays a role in the activation of archaeal genes transcribed by RNA polymerase. Binds specifically to the TATA box promoter element which lies close to the position of transcription initiation. This is TATA-box-binding protein from Thermococcus sibiricus (strain DSM 12597 / MM 739).